A 287-amino-acid polypeptide reads, in one-letter code: Small ribosomal subunit protein uS2 (287 aa).

A disordered region spans residues 235–287 (ESGFATGGGDWEATAPAAASGWDDAAAQPQNWDSAAQGAASWDEAAAPKEGQW). Positions 247 to 261 (ATAPAAASGWDDAAA) are enriched in low complexity.

Belongs to the universal ribosomal protein uS2 family. As to quaternary structure, component of the small ribosomal subunit. Mature ribosomes consist of a small (40S) and a large (60S) subunit. The 40S subunit contains about 33 different proteins and 1 molecule of RNA (18S). The 60S subunit contains about 49 different proteins and 3 molecules of RNA (25S, 5.8S and 5S). Interacts with RPS21.

Its subcellular location is the cytoplasm. Its function is as follows. Required for the assembly and/or stability of the 40S ribosomal subunit. Required for the processing of the 20S rRNA-precursor to mature 18S rRNA in a late step of the maturation of 40S ribosomal subunits. This Pyricularia oryzae (strain 70-15 / ATCC MYA-4617 / FGSC 8958) (Rice blast fungus) protein is Small ribosomal subunit protein uS2.